A 44-amino-acid polypeptide reads, in one-letter code: Defensin-like protein 1 (44 aa).

A Pyrrolidone carboxylic acid modification is found at Gln1. Cys15 and Cys36 are oxidised to a cystine.

It belongs to the DEFL family. Forms oligomers in its native state.

It localises to the secreted. Possesses antifungal activity sensitive to inorganic cations. The sequence is that of Defensin-like protein 1 (AFP1) from Brassica napus (Rape).